Consider the following 274-residue polypeptide: 2,3,4,5-tetrahydropyridine-2,6-dicarboxylate N-succinyltransferase (274 aa).

The substrate site is built by Arg104 and Asp141.

The protein belongs to the transferase hexapeptide repeat family. In terms of assembly, homotrimer.

The protein localises to the cytoplasm. The catalysed reaction is (S)-2,3,4,5-tetrahydrodipicolinate + succinyl-CoA + H2O = (S)-2-succinylamino-6-oxoheptanedioate + CoA. The protein operates within amino-acid biosynthesis; L-lysine biosynthesis via DAP pathway; LL-2,6-diaminopimelate from (S)-tetrahydrodipicolinate (succinylase route): step 1/3. In Shewanella amazonensis (strain ATCC BAA-1098 / SB2B), this protein is 2,3,4,5-tetrahydropyridine-2,6-dicarboxylate N-succinyltransferase.